Here is a 126-residue protein sequence, read N- to C-terminus: Copper resistance protein C (126 aa).

The signal sequence occupies residues 1–23 (MSILNKAILTGGLVMGVAFSAMA). His24 provides a ligand contact to Cu(2+). Cu(+) is bound by residues Met63, Met66, Met69, His72, and Met75. Position 115 (His115) interacts with Cu(2+).

Belongs to the CopC family. As to quaternary structure, monomer-dimer equilibrium in solution for the apo protein. Dimerization is significantly enhanced upon binding of copper(I).

It localises to the periplasm. Its function is as follows. Copper-binding protein involved in copper resistance. The chain is Copper resistance protein C from Escherichia coli.